The chain runs to 309 residues: Thiamine-monophosphate kinase (309 aa).

Mg(2+) is bound by residues Asp-41 and Asp-55. His-62 provides a ligand contact to substrate. The Mg(2+) site is built by Asp-83, Asp-128, and Asp-215. 127–128 serves as a coordination point for ATP; it reads GD. Ser-217 contacts ATP. Mg(2+) is bound at residue Asp-218. Residue Glu-268 participates in substrate binding.

This sequence belongs to the thiamine-monophosphate kinase family.

It catalyses the reaction thiamine phosphate + ATP = thiamine diphosphate + ADP. The protein operates within cofactor biosynthesis; thiamine diphosphate biosynthesis; thiamine diphosphate from thiamine phosphate: step 1/1. Its function is as follows. Catalyzes the ATP-dependent phosphorylation of thiamine-monophosphate (TMP) to form thiamine-pyrophosphate (TPP), the active form of vitamin B1. This is Thiamine-monophosphate kinase from Methanopyrus kandleri (strain AV19 / DSM 6324 / JCM 9639 / NBRC 100938).